Here is a 344-residue protein sequence, read N- to C-terminus: Anthranilate phosphoribosyltransferase (344 aa).

5-phospho-alpha-D-ribose 1-diphosphate contacts are provided by residues G84, 87–88 (GD), S92, 94–97 (NIST), 112–120 (KHGNRSASG), and S124. G84 provides a ligand contact to anthranilate. Residue S96 participates in Mg(2+) binding. N115 contacts anthranilate. An anthranilate-binding site is contributed by R170. The Mg(2+) site is built by D229 and E230.

The protein belongs to the anthranilate phosphoribosyltransferase family. Homodimer. Mg(2+) serves as cofactor.

It carries out the reaction N-(5-phospho-beta-D-ribosyl)anthranilate + diphosphate = 5-phospho-alpha-D-ribose 1-diphosphate + anthranilate. The protein operates within amino-acid biosynthesis; L-tryptophan biosynthesis; L-tryptophan from chorismate: step 2/5. Its function is as follows. Catalyzes the transfer of the phosphoribosyl group of 5-phosphorylribose-1-pyrophosphate (PRPP) to anthranilate to yield N-(5'-phosphoribosyl)-anthranilate (PRA). This chain is Anthranilate phosphoribosyltransferase, found in Synechococcus sp. (strain RCC307).